The primary structure comprises 457 residues: GTPase Der (457 aa).

2 consecutive EngA-type G domains span residues 4 to 169 and 177 to 352; these read PTIA…PENN and IMMS…NQHR. Residues 10–17, 57–61, 120–123, 183–190, 230–234, and 295–298 contribute to the GTP site; these read GRPNVGKS, DTGGL, NKCE, DTAGI, and NKWD. Residues 353-438 form the KH-like domain; it reads RRVTTSVVNE…PLILLWRGKQ (86 aa).

It belongs to the TRAFAC class TrmE-Era-EngA-EngB-Septin-like GTPase superfamily. EngA (Der) GTPase family. Associates with the 50S ribosomal subunit.

In terms of biological role, GTPase that plays an essential role in the late steps of ribosome biogenesis. This is GTPase Der from Prochlorococcus marinus (strain MIT 9215).